The sequence spans 132 residues: Small ribosomal subunit protein uS8 (132 aa).

The protein belongs to the universal ribosomal protein uS8 family. Part of the 30S ribosomal subunit. Contacts proteins S5 and S12.

One of the primary rRNA binding proteins, it binds directly to 16S rRNA central domain where it helps coordinate assembly of the platform of the 30S subunit. The protein is Small ribosomal subunit protein uS8 of Xylella fastidiosa (strain 9a5c).